A 178-amino-acid polypeptide reads, in one-letter code: NADH-quinone oxidoreductase subunit I 2 (178 aa).

2 consecutive 4Fe-4S ferredoxin-type domains span residues 46–78 (IVLT…MQAA) and 88–117 (AWFR…LTPF). [4Fe-4S] cluster is bound by residues cysteine 58, cysteine 61, cysteine 64, cysteine 68, cysteine 97, cysteine 100, cysteine 103, and cysteine 107.

The protein belongs to the complex I 23 kDa subunit family. As to quaternary structure, NDH-1 is composed of 14 different subunits. Subunits NuoA, H, J, K, L, M, N constitute the membrane sector of the complex. [4Fe-4S] cluster is required as a cofactor.

It is found in the cell inner membrane. The catalysed reaction is a quinone + NADH + 5 H(+)(in) = a quinol + NAD(+) + 4 H(+)(out). In terms of biological role, NDH-1 shuttles electrons from NADH, via FMN and iron-sulfur (Fe-S) centers, to quinones in the respiratory chain. The immediate electron acceptor for the enzyme in this species is believed to be ubiquinone. Couples the redox reaction to proton translocation (for every two electrons transferred, four hydrogen ions are translocated across the cytoplasmic membrane), and thus conserves the redox energy in a proton gradient. The protein is NADH-quinone oxidoreductase subunit I 2 of Syntrophobacter fumaroxidans (strain DSM 10017 / MPOB).